Here is a 368-residue protein sequence, read N- to C-terminus: NAD(P)H-quinone oxidoreductase subunit 1, chloroplastic (368 aa).

Helical transmembrane passes span 27 to 47 (FLWI…GVLV), 97 to 117 (WLFN…YLVI), 130 to 150 (IGVF…LMAG), 166 to 186 (AAQS…IALL), 204 to 224 (FLSW…IASL), 249 to 269 (YSGM…LVSS), 270 to 290 (LFVT…FSLF), 305 to 325 (VISI…FLFI), and 348 to 368 (FLLP…LFLL).

This sequence belongs to the complex I subunit 1 family. In terms of assembly, NDH is composed of at least 16 different subunits, 5 of which are encoded in the nucleus.

The protein localises to the plastid. It localises to the chloroplast thylakoid membrane. It carries out the reaction a plastoquinone + NADH + (n+1) H(+)(in) = a plastoquinol + NAD(+) + n H(+)(out). It catalyses the reaction a plastoquinone + NADPH + (n+1) H(+)(in) = a plastoquinol + NADP(+) + n H(+)(out). Its function is as follows. NDH shuttles electrons from NAD(P)H:plastoquinone, via FMN and iron-sulfur (Fe-S) centers, to quinones in the photosynthetic chain and possibly in a chloroplast respiratory chain. The immediate electron acceptor for the enzyme in this species is believed to be plastoquinone. Couples the redox reaction to proton translocation, and thus conserves the redox energy in a proton gradient. In Marchantia polymorpha (Common liverwort), this protein is NAD(P)H-quinone oxidoreductase subunit 1, chloroplastic.